The following is a 138-amino-acid chain: Small ribosomal subunit protein uS11 (138 aa).

The span at 1 to 12 (MAQAKKGGTAAK) shows a compositional bias: low complexity. Disordered regions lie at residues 1-32 (MAQAKKGGTAAKKGQKTRRREKKNVPHGAAHI) and 119-138 (ISDVTPQPHNGCRPPKRRRV). Residues 13–22 (KGQKTRRREK) are compositionally biased toward basic residues.

Belongs to the universal ribosomal protein uS11 family. Part of the 30S ribosomal subunit. Interacts with proteins S7 and S18. Binds to IF-3.

In terms of biological role, located on the platform of the 30S subunit, it bridges several disparate RNA helices of the 16S rRNA. Forms part of the Shine-Dalgarno cleft in the 70S ribosome. The polypeptide is Small ribosomal subunit protein uS11 (Mycolicibacterium smegmatis (strain ATCC 700084 / mc(2)155) (Mycobacterium smegmatis)).